The primary structure comprises 992 residues: Disks large-associated protein 1 (992 aa).

Disordered stretches follow at residues 154-209 and 355-375; these read SLEG…SWWS and KAMG…SPKV. Phosphoserine is present on serine 169. Over residues 195 to 209 the composition is skewed to low complexity; it reads SNASNASPTSPSWWS. Residues serine 362, serine 365, serine 368, serine 372, serine 389, serine 418, serine 421, serine 425, serine 428, serine 437, serine 509, serine 516, and serine 578 each carry the phosphoserine modification. Threonine 579 is modified (phosphothreonine). A phosphoserine mark is found at serine 581 and serine 605. Threonine 606 carries the post-translational modification Phosphothreonine. Residues serine 608 and serine 611 each carry the phosphoserine modification. 2 interaction with DYL2 regions span residues 665 to 676 and 687 to 698; these read LSIGIQVDDAEE and SKFQSVGVQVEE. Positions 914 to 980 are disordered; sequence WKQMDPLDKK…QNSATESAES (67 aa). 2 stretches are compositionally biased toward basic and acidic residues: residues 918 to 927 and 943 to 958; these read DPLDKKERRA and IRER…EARK. Residue serine 947 is modified to Phosphoserine. Over residues 969–978 the composition is skewed to polar residues; that stretch reads VRQNSATESA. Positions 990–992 match the PDZ-binding motif; the sequence is TRL.

The protein belongs to the SAPAP family. Interacts with guanylate kinase-like domain of DLG1, DLG2, DLG3, DLG4 and AIP1. Interacts with the PDZ domain of SHANK1, SHANK2 and SHANK3. Found in a complex with DLG4 and SHANK1, SHANK2 or SHANK3. Found in a complex with DLG4 and BEGAIN. Interacts with DYL2 and LRFN1. Interacts with MPP2 (via the SH3-Guanylate kinase-like sub-module). In terms of processing, ubiquitinated by TRIM3; leading to proteasomal degradation. In terms of tissue distribution, expressed in brain and testis.

The protein resides in the cell membrane. The protein localises to the postsynaptic density. Its subcellular location is the synapse. Its function is as follows. Part of the postsynaptic scaffold in neuronal cells. The sequence is that of Disks large-associated protein 1 from Rattus norvegicus (Rat).